The primary structure comprises 277 residues: Nudix hydrolase 10 (277 aa).

The 139-residue stretch at Trp97–His235 folds into the Nudix hydrolase domain. A Nudix box motif is present at residues Gly142–Gly163. Mg(2+) is bound by residues Glu157 and Glu161.

Belongs to the Nudix hydrolase family. It depends on Mg(2+) as a cofactor. The cofactor is Mn(2+). In terms of tissue distribution, expressed in roots, stems and, at lower level, leaves.

It carries out the reaction ADP-D-ribose + H2O = D-ribose 5-phosphate + AMP + 2 H(+). The enzyme catalyses NAD(+) + H2O = beta-nicotinamide D-ribonucleotide + AMP + 2 H(+). It catalyses the reaction NADH + H2O = reduced beta-nicotinamide D-ribonucleotide + AMP + 2 H(+). In terms of biological role, may mediate the hydrolysis of some nucleoside diphosphate derivatives. In vitro, uses both ADP-ribose and NADH as substrates; however the relevance of such substrates in vivo is unclear. The chain is Nudix hydrolase 10 (NUDT10) from Arabidopsis thaliana (Mouse-ear cress).